The following is a 932-amino-acid chain: Serine/threonine-protein kinase PknD (932 aa).

The 288-residue stretch at 4–291 (YDIVRIIGKG…ELKEDIESHL (288 aa)) folds into the Protein kinase domain. Residues 10 to 18 (IGKGGMGEV) and Lys33 each bind ATP. Asp138 serves as the catalytic Proton acceptor.

It belongs to the protein kinase superfamily. Ser/Thr protein kinase family. Autophosphorylated on serine and threonine residues.

It catalyses the reaction L-seryl-[protein] + ATP = O-phospho-L-seryl-[protein] + ADP + H(+). The catalysed reaction is L-threonyl-[protein] + ATP = O-phospho-L-threonyl-[protein] + ADP + H(+). Together with the serine/threonine kinase Pkn1, may play a role in the specific interactions with host proteins during intracellular growth. This chain is Serine/threonine-protein kinase PknD, found in Chlamydia pneumoniae (Chlamydophila pneumoniae).